The following is a 364-amino-acid chain: Solute carrier family 35 member C2 (364 aa).

The next 2 membrane-spanning stretches (helical) occupy residues 14–34 (AALTLGLVLLYYCFSIGITFY) and 42–62 (FHFPLFMTMLHLAVIFLFSAL). N-linked (GlcNAc...) asparagine glycosylation is present at N102. Helical transmembrane passes span 104–124 (SFLYITVSLYTMTKSSAVLFI), 136–156 (LRAALVLVVLLIAGGLFMFTY), 166–186 (FALVLGASFIGGIRWTLTQIL), 202–222 (FHLQPLMFLGLFPLFAIFEGL), 238–258 (LLLWVLGSLLLGGILAFGLGF), 272–292 (LSIAGIFKEVCTLLLAAHLLG), and 295–315 (ISLLNWLGFALCLSGISLHVA). A phosphoserine mark is found at S335 and S336.

The protein belongs to the TPT transporter family. SLC35C subfamily.

Its subcellular location is the golgi apparatus. It is found in the cis-Golgi network membrane. It localises to the endoplasmic reticulum-Golgi intermediate compartment membrane. In terms of biological role, may play an important role in the cellular response to tissue hypoxia. May be either a GDP-fucose transporter that competes with SLC35C1 for GDP-fucose, or a factor that otherwise enhances the fucosylation of Notch and is required for optimal Notch signaling in mammalian cells. In Mus musculus (Mouse), this protein is Solute carrier family 35 member C2 (Slc35c2).